We begin with the raw amino-acid sequence, 376 residues long: MSQVELLNQTLTLQRFPPMPEETPLQAWEAADEYLLQQVEQPSGPVLIFNDSFGALACALAEVRPVSVNDSFIAHQATRHNLRLNDIDDSLVTMQDSLSPLPDAPELVLMKIPKQLALLEQQLRALRKVVTPQTRIIAGAKARDIHTSTLTLFEKILGPTTTTLAWKKARLIHCAFSAPALADAPETLSWKLDGTPWTIHNHASVFSRTSLDIGARFFMQHLPEAVEGEMVDLGCGNGVIGLTLLAQNPQAKVRFVDESYMAVASSRLNVETNLPEAMERCEFQVNNALTGVEPESFHAVLCNPPFHQQHAITDHIAWQMFQDARRCLKWGGELRIVGNRHLDYFRKLKKIFGNCTTVATNNKFVVLKAVKLRKSR.

The protein belongs to the methyltransferase superfamily. RlmG family.

It localises to the cytoplasm. It carries out the reaction guanosine(1835) in 23S rRNA + S-adenosyl-L-methionine = N(2)-methylguanosine(1835) in 23S rRNA + S-adenosyl-L-homocysteine + H(+). Functionally, specifically methylates the guanine in position 1835 (m2G1835) of 23S rRNA. This Cronobacter sakazakii (strain ATCC BAA-894) (Enterobacter sakazakii) protein is Ribosomal RNA large subunit methyltransferase G.